A 107-amino-acid chain; its full sequence is YAPSALVLTVGHGESAATAAPLRAVTLTCAPTASGTHPAADAACAELRAAHGDPSALAADDAVMCTREYAPVVVTVDGVWQGRRLSYERTFANECVKNAGSASVFTF.

2 disulfides stabilise this stretch: Cys-29–Cys-44 and Cys-65–Cys-95.

This sequence belongs to the protease inhibitor I16 (SSI) family. In terms of assembly, homodimer.

Its subcellular location is the secreted. Functionally, inhibitor of subtilisin BPN' and trypsin. In Streptomyces coelicolor, this protein is Subtilisin inhibitor-like protein 3.